A 110-amino-acid polypeptide reads, in one-letter code: Light-harvesting complex-like protein OHP1, chloroplastic (110 aa).

A chloroplast-targeting transit peptide spans 1–41 (MSSSPLSSSLFHPLSTLSTHCHGRRQNLCFNRKQQPFVVRA). The Stromal portion of the chain corresponds to 42 to 74 (AKLPEGVIVPKAQPKSQPAFLGFTQTAEIWNSR). Residues 75–95 (ACMIGLIGTFIVELILNKGIL) form a helical membrane-spanning segment. Residues 96–110 (ELIGVEIGKGLDLPL) lie on the Lumenal side of the membrane.

It belongs to the ELIP/psbS family. May bind chlorophyll and form dimers in the thylakoid membrane. Component of a high molecular weight complex containing OHP1, OHP2 and HCF244, and PSII core proteins D1/D2, HCF136 and HCF173. Interacts with HCF244. Forms a trimeric complex with OHP2 and HCF244 that mutually stabilizes each subunit. Mostly expressed in cotyledons and shoot apices.

It localises to the plastid. Its subcellular location is the chloroplast thylakoid membrane. In terms of biological role, may play a photoprotective role in the thylakoid membrane in response to light stress. Involved in photosystems I (PSI) and II (PSII) core proteins function. Forms a trimeric complex with OHP2 and HCF244 that is required to promote PSII core subunit assembly. The trimeric complex forms a transient PSII reaction center-like complex with PsbA, PsbD, PsbE, PsbF and PsbI subunits in thylakoids for early assembly of PSII as well as PSII repair. The trimeric complex is required for the recruitment of ribosomes to the psbA mRNA during PSII biogenesis and repair. Forms a heterodimer with OHP1 that binds chlorophylls and carotenoids, and that may function in the delivery of pigments to the PsbA subunit of PSII. The sequence is that of Light-harvesting complex-like protein OHP1, chloroplastic from Arabidopsis thaliana (Mouse-ear cress).